We begin with the raw amino-acid sequence, 225 residues long: ATP synthase subunit a (225 aa).

Transmembrane regions (helical) follow at residues 18–38, 73–93, 100–120, 126–146, 156–176, and 187–207; these read LSLNWTSTFLGLLLIPSMFWL, ILISIFIMMLFNNFMGLFPYI, MTLTFSIALPMWMSFMLFGWI, MFTHLVPQGTPNALMSFMVLI, GTLAVRLAANMIAGHLLLTLL, and IMLFLIIGQMLLLILESAVAM.

It belongs to the ATPase A chain family. In terms of assembly, F-type ATPases have 2 components, CF(1) - the catalytic core - and CF(0) - the membrane proton channel. CF(1) has five subunits: alpha(3), beta(3), gamma(1), delta(1), epsilon(1). CF(0) has three main subunits: a, b and c.

It is found in the mitochondrion inner membrane. Functionally, mitochondrial membrane ATP synthase (F(1)F(0) ATP synthase or Complex V) produces ATP from ADP in the presence of a proton gradient across the membrane which is generated by electron transport complexes of the respiratory chain. F-type ATPases consist of two structural domains, F(1) - containing the extramembraneous catalytic core and F(0) - containing the membrane proton channel, linked together by a central stalk and a peripheral stalk. During catalysis, ATP synthesis in the catalytic domain of F(1) is coupled via a rotary mechanism of the central stalk subunits to proton translocation. Key component of the proton channel; it may play a direct role in the translocation of protons across the membrane. This chain is ATP synthase subunit a (ATP6), found in Locusta migratoria (Migratory locust).